Here is a 212-residue protein sequence, read N- to C-terminus: Pyridoxine/pyridoxamine 5'-phosphate oxidase (212 aa).

Substrate contacts are provided by residues 8-11 (RREY) and lysine 66. FMN contacts are provided by residues 61-66 (RIVLLK), 76-77 (FT), arginine 82, lysine 83, and glutamine 105. Positions 123, 127, and 131 each coordinate substrate. FMN contacts are provided by residues 140–141 (QS) and tryptophan 185. 191–193 (RLH) contacts substrate. Arginine 195 lines the FMN pocket.

The protein belongs to the pyridoxamine 5'-phosphate oxidase family. Homodimer. FMN is required as a cofactor.

The catalysed reaction is pyridoxamine 5'-phosphate + O2 + H2O = pyridoxal 5'-phosphate + H2O2 + NH4(+). The enzyme catalyses pyridoxine 5'-phosphate + O2 = pyridoxal 5'-phosphate + H2O2. Its pathway is cofactor metabolism; pyridoxal 5'-phosphate salvage; pyridoxal 5'-phosphate from pyridoxamine 5'-phosphate: step 1/1. It functions in the pathway cofactor metabolism; pyridoxal 5'-phosphate salvage; pyridoxal 5'-phosphate from pyridoxine 5'-phosphate: step 1/1. Its function is as follows. Catalyzes the oxidation of either pyridoxine 5'-phosphate (PNP) or pyridoxamine 5'-phosphate (PMP) into pyridoxal 5'-phosphate (PLP). This Shewanella sp. (strain W3-18-1) protein is Pyridoxine/pyridoxamine 5'-phosphate oxidase.